A 402-amino-acid chain; its full sequence is Protein FixF (402 aa).

This Sinorhizobium fredii (strain NBRC 101917 / NGR234) protein is Protein FixF (fixF).